The chain runs to 79 residues: Small ribosomal subunit protein bS18 (79 aa).

It belongs to the bacterial ribosomal protein bS18 family. In terms of assembly, part of the 30S ribosomal subunit. Forms a tight heterodimer with protein bS6.

In terms of biological role, binds as a heterodimer with protein bS6 to the central domain of the 16S rRNA, where it helps stabilize the platform of the 30S subunit. This chain is Small ribosomal subunit protein bS18, found in Enterococcus faecalis (strain ATCC 700802 / V583).